The primary structure comprises 488 residues: Inosine-5'-monophosphate dehydrogenase (488 aa).

CBS domains are found at residues 95–153 (VISN…SIKI) and 157–216 (MTKD…AKDE). Residues aspartate 250 and 300–302 (GIG) contribute to the NAD(+) site. K(+) contacts are provided by glycine 302 and glycine 304. An IMP-binding site is contributed by serine 305. Cysteine 307 contributes to the K(+) binding site. Cysteine 307 serves as the catalytic Thioimidate intermediate. IMP is bound by residues 340 to 342 (DGG), 363 to 364 (GS), and 387 to 391 (YRGMG). Residue arginine 403 is the Proton acceptor of the active site. IMP is bound at residue glutamate 417. Residues 467-488 (AGLAESHPHNVQITKESPNYSF) form a disordered region. K(+) is bound by residues glutamate 471, serine 472, and histidine 473. Polar residues predominate over residues 475–488 (HNVQITKESPNYSF).

Belongs to the IMPDH/GMPR family. In terms of assembly, homotetramer. K(+) is required as a cofactor.

The catalysed reaction is IMP + NAD(+) + H2O = XMP + NADH + H(+). It functions in the pathway purine metabolism; XMP biosynthesis via de novo pathway; XMP from IMP: step 1/1. Mycophenolic acid (MPA) is a non-competitive inhibitor that prevents formation of the closed enzyme conformation by binding to the same site as the amobile flap. In contrast, mizoribine monophosphate (MZP) is a competitive inhibitor that induces the closed conformation. MPA is a potent inhibitor of mammalian IMPDHs but a poor inhibitor of the bacterial enzymes. MZP is a more potent inhibitor of bacterial IMPDH. Functionally, catalyzes the conversion of inosine 5'-phosphate (IMP) to xanthosine 5'-phosphate (XMP), the first committed and rate-limiting step in the de novo synthesis of guanine nucleotides, and therefore plays an important role in the regulation of cell growth. In Staphylococcus epidermidis (strain ATCC 35984 / DSM 28319 / BCRC 17069 / CCUG 31568 / BM 3577 / RP62A), this protein is Inosine-5'-monophosphate dehydrogenase.